The chain runs to 209 residues: Lectin (209 aa).

Homodimer; non-covalently linked.

In terms of biological role, binds chito-oligosaccherides. Has hemagglutinating activity towards rabbit erythrocytes. The polypeptide is Lectin (Luffa acutangula (Ridged gourd)).